The primary structure comprises 359 residues: 4-hydroxy-tetrahydrodipicolinate synthase, chloroplastic (359 aa).

The N-terminal 33 residues, 1–33 (MSSSIIGRCHFVADSIEAAGTKRRTTRWRSPRA), are a transit peptide targeting the chloroplast. Pyruvate is bound at residue Thr102. Residue Tyr188 is the Proton donor/acceptor of the active site. Catalysis depends on Lys216, which acts as the Schiff-base intermediate with substrate. A pyruvate-binding site is contributed by Ile255.

Belongs to the DapA family.

Its subcellular location is the plastid. The protein resides in the chloroplast. The enzyme catalyses L-aspartate 4-semialdehyde + pyruvate = (2S,4S)-4-hydroxy-2,3,4,5-tetrahydrodipicolinate + H2O + H(+). It functions in the pathway amino-acid biosynthesis; L-lysine biosynthesis via DAP pathway; (S)-tetrahydrodipicolinate from L-aspartate: step 3/4. Functionally, catalyzes the condensation of (S)-aspartate-beta-semialdehyde [(S)-ASA] and pyruvate to 4-hydroxy-tetrahydrodipicolinate (HTPA). The protein is 4-hydroxy-tetrahydrodipicolinate synthase, chloroplastic (DHPS1) of Nicotiana tabacum (Common tobacco).